Reading from the N-terminus, the 549-residue chain is MKNINPTQTAAWQALQKHFDEMKDVTIADLFAKDGDRFSKFSATFDDQMLVDYSKNRITEETLAKLQDLAKECDLASAIKSMFSGEKINRTENRAVLHVALRNRSNTPILVDGKDVMPEVNAVLEKMKTFSEAIISGEWKGYTGKAITDVVNIGIGGSDLGPYMVTEALRPYKNHLNMHFVSNVDGTHIAEVLKKVNPETTLFLVASKTFTTQETMTNAHSARDWFLKAAGDEKHVAKHFAALSTNATAVGEFGIDTANMFEFWDWVGGRYSLWSAIGLSIVLSIGFDNFVELLSGAHAMDKHFSTTPAEKNLPVLLALIGIWYNNFFGAETEAILPYDQYMHRFAAYFQQGNMESNGKYVDRNGNVVDYQTGPIIWGEPGTNGQHAFYQLIHQGTKMVPCDFIAPAITHNPLSDHHQKLLSNFFAQTEALAFGKSREVVEQEYRDQGKDPATLDYVVPFKVFEGNRPTNSILLREITPFSLGALIALYEHKIFTQGVILNIFTFDQWGVELGKQLANRILPELKDDKEISSHDSSTNGLINRYKAWRG.

Lysine 80, lysine 228, and lysine 234 each carry N6-acetyllysine. Glutamate 355 (proton donor) is an active-site residue. Catalysis depends on residues histidine 386 and lysine 514.

It belongs to the GPI family.

It is found in the cytoplasm. The enzyme catalyses alpha-D-glucose 6-phosphate = beta-D-fructose 6-phosphate. It participates in carbohydrate biosynthesis; gluconeogenesis. The protein operates within carbohydrate degradation; glycolysis; D-glyceraldehyde 3-phosphate and glycerone phosphate from D-glucose: step 2/4. Catalyzes the reversible isomerization of glucose-6-phosphate to fructose-6-phosphate. The sequence is that of Glucose-6-phosphate isomerase from Escherichia fergusonii (strain ATCC 35469 / DSM 13698 / CCUG 18766 / IAM 14443 / JCM 21226 / LMG 7866 / NBRC 102419 / NCTC 12128 / CDC 0568-73).